A 463-amino-acid chain; its full sequence is Glutamate--tRNA ligase 1 (463 aa).

A 'HIGH' region motif is present at residues 10–20 (PSPTGFLHIGS). A 'KMSKS' region motif is present at residues 239-243 (KLSKR). Lysine 242 is a binding site for ATP.

It belongs to the class-I aminoacyl-tRNA synthetase family. Glutamate--tRNA ligase type 1 subfamily. Monomer.

The protein resides in the cytoplasm. It carries out the reaction tRNA(Glu) + L-glutamate + ATP = L-glutamyl-tRNA(Glu) + AMP + diphosphate. Functionally, catalyzes the attachment of glutamate to tRNA(Glu) in a two-step reaction: glutamate is first activated by ATP to form Glu-AMP and then transferred to the acceptor end of tRNA(Glu). The polypeptide is Glutamate--tRNA ligase 1 (Rickettsia canadensis (strain McKiel)).